Here is a 427-residue protein sequence, read N- to C-terminus: Transcription factor MYB98 (427 aa).

A Nuclear localization signal 1 motif is present at residues 195-202; that stretch reads TRKLSSSS. 2 HTH myb-type domains span residues 212–267 and 268–318; these read KSTL…RPDI and KKET…RRQF. 2 consecutive DNA-binding regions (H-T-H motif) follow at residues 240–263 and 291–314; these read WSHI…HNHL and WAEI…NATK. The short motif at 361–368 is the Nuclear localization signal 2 element; that stretch reads NKKKDVVV.

In terms of tissue distribution, expressed at high levels in the synergid cells of the female gametophyte, and at lower levels in the endosperm of young seeds and the trichomes of young leaves and sepals.

The protein resides in the nucleus. Its function is as follows. Transcription factor that binds to the motif 5'-GTAACNT-3' in the promoter of target genes (e.g. DD11 and DD18) and promotes their expression within synergid cells (e.g. in the filiform apparatus) in ovules. Required for the formation of the filiform apparatus during synergid cell differentiation in the female gametophyte. Involved in pollen tube guidance to the micropyle. The sequence is that of Transcription factor MYB98 from Arabidopsis thaliana (Mouse-ear cress).